Reading from the N-terminus, the 90-residue chain is Small ribosomal subunit protein bS16 (90 aa).

Belongs to the bacterial ribosomal protein bS16 family.

The sequence is that of Small ribosomal subunit protein bS16 from Fervidobacterium nodosum (strain ATCC 35602 / DSM 5306 / Rt17-B1).